The following is a 404-amino-acid chain: Multidrug resistance protein MdtG (404 aa).

Transmembrane regions (helical) follow at residues 19–39 (LGCFLTGAAFSLVMPFLPLYV), 56–76 (LVFSITFLFSAIASPFWGGLA), 90–110 (LGMAIVMLLMGMAQNIWQFLI), 113–133 (ALLGLLGGFIPNANALIATQV), 144–164 (TLSTGGVSGALLGPLAGGLLA), 171–191 (PVFFITASVLFICFLLTFFFI), 222–242 (LFVTTLIIQVATGSIAPILTL), 254–274 (IAFISGMIASVPGVAALLSAP), 288–308 (ILIVALIISVLLLIPMSFVQT), 317–337 (FLLGAADGALLPAVQTLLVYN), and 376–396 (AVFCVTAGVVLFNAIYSWNSL).

The protein belongs to the major facilitator superfamily. DHA1 family. MdtG (TC 2.A.1.2.20) subfamily.

The protein resides in the cell inner membrane. This chain is Multidrug resistance protein MdtG, found in Salmonella typhimurium (strain LT2 / SGSC1412 / ATCC 700720).